Consider the following 175-residue polypeptide: Acireductone dioxygenase (175 aa).

Fe(2+) contacts are provided by histidine 81, histidine 83, glutamate 87, and histidine 126. The Ni(2+) site is built by histidine 81, histidine 83, glutamate 87, and histidine 126.

This sequence belongs to the acireductone dioxygenase (ARD) family. Requires Fe(2+) as cofactor. The cofactor is Ni(2+).

Its subcellular location is the cytoplasm. It is found in the nucleus. The enzyme catalyses 1,2-dihydroxy-5-(methylsulfanyl)pent-1-en-3-one + O2 = 4-methylsulfanyl-2-oxobutanoate + formate + 2 H(+). It carries out the reaction 1,2-dihydroxy-5-(methylsulfanyl)pent-1-en-3-one + O2 = 3-(methylsulfanyl)propanoate + CO + formate + 2 H(+). It functions in the pathway amino-acid biosynthesis; L-methionine biosynthesis via salvage pathway; L-methionine from S-methyl-5-thio-alpha-D-ribose 1-phosphate: step 5/6. Catalyzes 2 different reactions between oxygen and the acireductone 1,2-dihydroxy-3-keto-5-methylthiopentene (DHK-MTPene) depending upon the metal bound in the active site. Fe-containing acireductone dioxygenase (Fe-ARD) produces formate and 2-keto-4-methylthiobutyrate (KMTB), the alpha-ketoacid precursor of methionine in the methionine recycle pathway. Ni-containing acireductone dioxygenase (Ni-ARD) produces methylthiopropionate, carbon monoxide and formate, and does not lie on the methionine recycle pathway. The polypeptide is Acireductone dioxygenase (Phaeosphaeria nodorum (strain SN15 / ATCC MYA-4574 / FGSC 10173) (Glume blotch fungus)).